Reading from the N-terminus, the 159-residue chain is Cyclic pyranopterin monophosphate synthase (159 aa).

Substrate-binding positions include 75–77 (LCH) and 113–114 (ME). Residue Asp-128 is part of the active site.

It belongs to the MoaC family. Homohexamer; trimer of dimers.

It catalyses the reaction (8S)-3',8-cyclo-7,8-dihydroguanosine 5'-triphosphate = cyclic pyranopterin phosphate + diphosphate. It participates in cofactor biosynthesis; molybdopterin biosynthesis. In terms of biological role, catalyzes the conversion of (8S)-3',8-cyclo-7,8-dihydroguanosine 5'-triphosphate to cyclic pyranopterin monophosphate (cPMP). This Yersinia pseudotuberculosis serotype IB (strain PB1/+) protein is Cyclic pyranopterin monophosphate synthase.